A 162-amino-acid polypeptide reads, in one-letter code: Regulator of sigma D (162 aa).

The protein belongs to the Rsd/AlgQ family. Interacts with RpoD.

The protein resides in the cytoplasm. Functionally, binds RpoD and negatively regulates RpoD-mediated transcription activation by preventing the interaction between the primary sigma factor RpoD with the catalytic core of the RNA polymerase and with promoter DNA. May be involved in replacement of the RNA polymerase sigma subunit from RpoD to RpoS during the transition from exponential growth to the stationary phase. In Salmonella paratyphi A (strain ATCC 9150 / SARB42), this protein is Regulator of sigma D.